The following is a 167-amino-acid chain: NAD(P)H-quinone oxidoreductase subunit I, chloroplastic (167 aa).

2 4Fe-4S ferredoxin-type domains span residues 55–84 (GRIH…VDWK) and 95–124 (LNYS…MTEE). [4Fe-4S] cluster-binding residues include Cys64, Cys67, Cys70, Cys74, Cys104, Cys107, Cys110, and Cys114.

This sequence belongs to the complex I 23 kDa subunit family. As to quaternary structure, NDH is composed of at least 16 different subunits, 5 of which are encoded in the nucleus. It depends on [4Fe-4S] cluster as a cofactor.

The protein resides in the plastid. It localises to the chloroplast thylakoid membrane. The enzyme catalyses a plastoquinone + NADH + (n+1) H(+)(in) = a plastoquinol + NAD(+) + n H(+)(out). It catalyses the reaction a plastoquinone + NADPH + (n+1) H(+)(in) = a plastoquinol + NADP(+) + n H(+)(out). Its function is as follows. NDH shuttles electrons from NAD(P)H:plastoquinone, via FMN and iron-sulfur (Fe-S) centers, to quinones in the photosynthetic chain and possibly in a chloroplast respiratory chain. The immediate electron acceptor for the enzyme in this species is believed to be plastoquinone. Couples the redox reaction to proton translocation, and thus conserves the redox energy in a proton gradient. The protein is NAD(P)H-quinone oxidoreductase subunit I, chloroplastic of Panax ginseng (Korean ginseng).